A 950-amino-acid chain; its full sequence is Protocadherin alpha-3 (950 aa).

A signal peptide spans 1–29; that stretch reads MLFSWREDPGAQCLLLSLLLLAASEVGSG. 6 Cadherin domains span residues 30-133, 134-242, 243-350, 351-455, 456-565, and 581-678; these read QLHY…APVF, PMAV…APAF, ERTI…VPEL, VIQS…APAF, SQSE…APAL, and VPRS…APKA. Residues 30-697 lie on the Extracellular side of the membrane; that stretch reads QLHYSVSEEA…GPEAALVDVN (668 aa). N257 and N265 each carry an N-linked (GlcNAc...) asparagine glycan. A glycan (N-linked (GlcNAc...) asparagine) is linked at N548. The chain crosses the membrane as a helical span at residues 698-718; it reads VYLIVAICAVSSLLVLTLLLY. The Cytoplasmic segment spans residues 719-950; sequence TALRCSAPPT…GNSTTDNSDQ (232 aa). PXXP repeat units lie at residues 734–737 and 774–777; these read PGKP and PSLP. The 6 X 4 AA repeats of P-X-X-P stretch occupies residues 734–894; that stretch reads PGKPTLVCSS…PDKFIIPGSP (161 aa). Disordered regions lie at residues 777-806, 831-856, and 869-950; these read PPCPISRDREEKQDVDVDLSAKPRQPNPDW, GPGGPDQQWPTVSSATPEPEAGEVSP, and FKYG…NSDQ. Positions 782–797 are enriched in basic and acidic residues; it reads SRDREEKQDVDVDLSA. PXXP repeat units follow at residues 799-802, 832-835, 873-876, and 891-894; these read PRQP, PGGP, PGNP, and PGSP. The span at 909-923 shows a compositional bias: basic and acidic residues; the sequence is DKSDFITFGKKEETK.

The protein resides in the cell membrane. In terms of biological role, potential calcium-dependent cell-adhesion protein. May be involved in the establishment and maintenance of specific neuronal connections in the brain. This Homo sapiens (Human) protein is Protocadherin alpha-3 (PCDHA3).